Reading from the N-terminus, the 348-residue chain is Dihydroorotase (348 aa).

Histidine 17 and histidine 19 together coordinate Zn(2+). Substrate is bound by residues 19-21 and asparagine 45; that span reads HLR. 3 residues coordinate Zn(2+): lysine 103, histidine 140, and histidine 178. Lysine 103 is subject to N6-carboxylysine. Histidine 140 is a binding site for substrate. Leucine 223 serves as a coordination point for substrate. Residue aspartate 251 coordinates Zn(2+). Residue aspartate 251 is part of the active site. 2 residues coordinate substrate: histidine 255 and alanine 267.

Belongs to the metallo-dependent hydrolases superfamily. DHOase family. Class II DHOase subfamily. In terms of assembly, homodimer. Zn(2+) serves as cofactor.

It carries out the reaction (S)-dihydroorotate + H2O = N-carbamoyl-L-aspartate + H(+). The protein operates within pyrimidine metabolism; UMP biosynthesis via de novo pathway; (S)-dihydroorotate from bicarbonate: step 3/3. In terms of biological role, catalyzes the reversible cyclization of carbamoyl aspartate to dihydroorotate. This Serratia proteamaculans (strain 568) protein is Dihydroorotase.